Here is a 671-residue protein sequence, read N- to C-terminus: DNA ligase (671 aa).

NAD(+)-binding positions include 32–36 (DAEYD), 81–82 (SL), and Glu-113. Lys-115 serves as the catalytic N6-AMP-lysine intermediate. NAD(+) contacts are provided by Arg-136, Glu-173, Lys-290, and Lys-314. 4 residues coordinate Zn(2+): Cys-408, Cys-411, Cys-426, and Cys-432. Residues 593-671 (EIDSPFAGKT…EAEMIRLLGA (79 aa)) enclose the BRCT domain.

It belongs to the NAD-dependent DNA ligase family. LigA subfamily. Mg(2+) is required as a cofactor. It depends on Mn(2+) as a cofactor.

The enzyme catalyses NAD(+) + (deoxyribonucleotide)n-3'-hydroxyl + 5'-phospho-(deoxyribonucleotide)m = (deoxyribonucleotide)n+m + AMP + beta-nicotinamide D-nucleotide.. Functionally, DNA ligase that catalyzes the formation of phosphodiester linkages between 5'-phosphoryl and 3'-hydroxyl groups in double-stranded DNA using NAD as a coenzyme and as the energy source for the reaction. It is essential for DNA replication and repair of damaged DNA. The protein is DNA ligase of Salmonella heidelberg (strain SL476).